Reading from the N-terminus, the 276-residue chain is Large ribosomal subunit protein uL2 (276 aa).

Residues 223–276 (GVAMNPVDHPHGGGEGRGKGHHPTSPWGLPTKGYKTRRGKRPSDKFIVRRRNEV) form a disordered region. 2 stretches are compositionally biased toward basic and acidic residues: residues 230 to 240 (DHPHGGGEGRG) and 263 to 276 (RPSD…RNEV).

This sequence belongs to the universal ribosomal protein uL2 family. Part of the 50S ribosomal subunit. Forms a bridge to the 30S subunit in the 70S ribosome.

In terms of biological role, one of the primary rRNA binding proteins. Required for association of the 30S and 50S subunits to form the 70S ribosome, for tRNA binding and peptide bond formation. It has been suggested to have peptidyltransferase activity; this is somewhat controversial. Makes several contacts with the 16S rRNA in the 70S ribosome. The polypeptide is Large ribosomal subunit protein uL2 (Thermotoga neapolitana (strain ATCC 49049 / DSM 4359 / NBRC 107923 / NS-E)).